The following is a 373-amino-acid chain: tRNA-specific 2-thiouridylase MnmA (373 aa).

Residues 12-19 (GMSGGVDS) and Met-38 each bind ATP. Residues 98–100 (NPD) form an interaction with target base in tRNA region. Cys-103 functions as the Nucleophile in the catalytic mechanism. A disulfide bridge connects residues Cys-103 and Cys-200. Gly-127 contributes to the ATP binding site. Positions 150-152 (KDQ) are interaction with tRNA. Residue Cys-200 is the Cysteine persulfide intermediate of the active site. The segment at 312–313 (RY) is interaction with tRNA.

This sequence belongs to the MnmA/TRMU family.

The protein localises to the cytoplasm. The catalysed reaction is S-sulfanyl-L-cysteinyl-[protein] + uridine(34) in tRNA + AH2 + ATP = 2-thiouridine(34) in tRNA + L-cysteinyl-[protein] + A + AMP + diphosphate + H(+). In terms of biological role, catalyzes the 2-thiolation of uridine at the wobble position (U34) of tRNA, leading to the formation of s(2)U34. The chain is tRNA-specific 2-thiouridylase MnmA from Streptococcus pyogenes serotype M6 (strain ATCC BAA-946 / MGAS10394).